Here is a 436-residue protein sequence, read N- to C-terminus: Acetyl-CoA decarbonylase/synthase complex subunit delta (436 aa).

It belongs to the CdhD family. Heterodimer of delta and gamma chains. The ACDS complex is made up of alpha, epsilon, beta, gamma and delta chains with a probable stoichiometry of (alpha(2)epsilon(2))(4)-beta(8)-(gamma(1)delta(1))(8).

It functions in the pathway one-carbon metabolism; methanogenesis from acetate. Its function is as follows. Part of a complex that catalyzes the reversible cleavage of acetyl-CoA, allowing growth on acetate as sole source of carbon and energy. Probably maintains the overall quaternary structure of the ACDS complex. This chain is Acetyl-CoA decarbonylase/synthase complex subunit delta, found in Methanosarcina mazei (strain ATCC BAA-159 / DSM 3647 / Goe1 / Go1 / JCM 11833 / OCM 88) (Methanosarcina frisia).